Here is a 282-residue protein sequence, read N- to C-terminus: UPF0761 membrane protein HAPS_1376 (282 aa).

Helical transmembrane passes span 32 to 52, 89 to 109, 124 to 144, 170 to 190, 202 to 222, and 234 to 254; these read LLSLVPLIMVVFSVFTLLPIF, MGIISIIGLVVVAVMLISSID, VILSFVVYLAVLIFAPIFAGA, LLKFIPFVLTWLLFALVYLIV, VGALFAGVFFTLGKQIFIWYI, and ALATIPIMIVWIHLSWQVVLL.

This sequence belongs to the UPF0761 family.

It is found in the cell inner membrane. This is UPF0761 membrane protein HAPS_1376 from Glaesserella parasuis serovar 5 (strain SH0165) (Haemophilus parasuis).